A 150-amino-acid polypeptide reads, in one-letter code: Catabolic 3-dehydroquinase 2 (150 aa).

Tyr-23 serves as the catalytic Proton acceptor. Positions 74, 80, and 87 each coordinate substrate. His-100 (proton donor) is an active-site residue. Substrate contacts are provided by residues 101–102 and Arg-111; that span reads IT.

It belongs to the type-II 3-dehydroquinase family. As to quaternary structure, homododecamer. Adopts a ring-like structure, composed of an arrangement of two hexameric rings stacked on top of one another.

It catalyses the reaction 3-dehydroquinate = 3-dehydroshikimate + H2O. Its pathway is aromatic compound metabolism; 3,4-dihydroxybenzoate biosynthesis; 3,4-dihydroxybenzoate from 3-dehydroquinate: step 1/2. Its function is as follows. Is involved in the catabolism of quinate. Allows the utilization of quinate as carbon source via the beta-ketoadipate pathway. This is Catabolic 3-dehydroquinase 2 from Aspergillus fumigatus (strain ATCC MYA-4609 / CBS 101355 / FGSC A1100 / Af293) (Neosartorya fumigata).